Here is a 274-residue protein sequence, read N- to C-terminus: Thiamine kinase (274 aa).

Belongs to the thiamine kinase family.

The catalysed reaction is thiamine + ATP = thiamine phosphate + ADP + H(+). It participates in cofactor biosynthesis; thiamine diphosphate biosynthesis; thiamine phosphate from thiamine: step 1/1. Its function is as follows. Catalyzes the ATP-dependent phosphorylation of thiamine to thiamine phosphate. Is involved in thiamine salvage. The sequence is that of Thiamine kinase from Salmonella typhi.